The primary structure comprises 367 residues: Glutamate 5-kinase (367 aa).

Lysine 10 is an ATP binding site. Substrate is bound by residues serine 50, aspartate 137, and asparagine 149. Residues 169-170 and 211-217 contribute to the ATP site; these read TD and TGGMSTK. The region spanning 275 to 353 is the PUA domain; it reads AGEITVDEGA…QEIDAILGYE (79 aa).

It belongs to the glutamate 5-kinase family.

The protein localises to the cytoplasm. The catalysed reaction is L-glutamate + ATP = L-glutamyl 5-phosphate + ADP. It functions in the pathway amino-acid biosynthesis; L-proline biosynthesis; L-glutamate 5-semialdehyde from L-glutamate: step 1/2. Its function is as follows. Catalyzes the transfer of a phosphate group to glutamate to form L-glutamate 5-phosphate. The protein is Glutamate 5-kinase of Escherichia fergusonii (strain ATCC 35469 / DSM 13698 / CCUG 18766 / IAM 14443 / JCM 21226 / LMG 7866 / NBRC 102419 / NCTC 12128 / CDC 0568-73).